The chain runs to 643 residues: U3 small nucleolar RNA-associated protein 5 (643 aa).

WD repeat units lie at residues 14–54 (GQYL…LYLE), 55–98 (DSKL…VTYK), 186–225 (GHVS…TKCV), 227–266 (VAES…SSTK), 340–389 (SADR…LEQE), and 471–511 (RLKP…IHGG). The segment at 565–643 (HSSEPVVEED…EAGYSDVEME (79 aa)) is disordered. The segment covering 570-611 (VVEEDEDDVEYNEELDDAGLIEDGEESYGSEEEEEGDSDNEE) has biased composition (acidic residues). Residues 612-626 (EQKHTSSKQDGRLET) are compositionally biased toward basic and acidic residues. A compositionally biased stretch (acidic residues) spans 627–643 (EQSDGEEEAGYSDVEME).

Belongs to the UTP5 family. Interacts with snoRNA U3. Interacts with MPP10. Component of the ribosomal small subunit (SSU) processome composed of at least 40 protein subunits and snoRNA U3. In the absence of snoRNA3, forms a complex with other t-UTPs. This complex can associate with pre-18S ribosomal RNAs.

The protein resides in the nucleus. Its subcellular location is the nucleolus. Its function is as follows. Involved in nucleolar processing of pre-18S ribosomal RNA. Required for optimal pre-ribosomal RNA transcription by RNA polymerase I together with a subset of U3 proteins required for transcription (t-UTPs). The protein is U3 small nucleolar RNA-associated protein 5 (UTP5) of Saccharomyces cerevisiae (strain ATCC 204508 / S288c) (Baker's yeast).